The primary structure comprises 445 residues: Rab GDP dissociation inhibitor beta (445 aa).

Residue Met-1 is modified to N-acetylmethionine. Residue Lys-57 is modified to N6-succinyllysine. Position 61 is a phosphoserine (Ser-61). Lys-112 bears the N6-acetyllysine mark. Ser-130 is modified (phosphoserine). Lys-269 carries the N6-acetyllysine modification. At Ser-382 the chain carries Phosphoserine.

It belongs to the Rab GDI family. Interacts with RHOH. Interacts with the GDP-bound inactive forms of RAB3A, RAB3B, RAB3C, RAB5A, RAB5B, RAB5C, RAB8A, RAB8B, RAB10, RAB12, RAB35, and RAB43; binds RAB3D to a lesser extent. Interacts with DZIP1; this interaction negatively regulates the interaction of GDI2 with GDP-bound RAB8A. As to expression, ubiquitous.

The protein resides in the cytoplasm. It is found in the membrane. The protein localises to the golgi apparatus. It localises to the trans-Golgi network. GDP-dissociation inhibitor preventing the GDP to GTP exchange of most Rab proteins. By keeping these small GTPases in their inactive GDP-bound form regulates intracellular membrane trafficking. Negatively regulates protein transport to the cilium and ciliogenesis through the inhibition of RAB8A. The protein is Rab GDP dissociation inhibitor beta (GDI2) of Homo sapiens (Human).